A 272-amino-acid polypeptide reads, in one-letter code: Eukaryotic translation initiation factor 3 subunit G (272 aa).

Disordered stretches follow at residues 1–28 (MPALDEIKSSWADEVELDSGSLPPPTEI) and 143–187 (AGKA…RGRD). The RRM domain maps to 190–268 (TAIRISNLSE…LILNVEWSKP (79 aa)).

Belongs to the eIF-3 subunit G family. In terms of assembly, component of the eukaryotic translation initiation factor 3 (eIF-3) complex.

Its subcellular location is the cytoplasm. Functionally, RNA-binding component of the eukaryotic translation initiation factor 3 (eIF-3) complex, which is involved in protein synthesis of a specialized repertoire of mRNAs and, together with other initiation factors, stimulates binding of mRNA and methionyl-tRNAi to the 40S ribosome. The eIF-3 complex specifically targets and initiates translation of a subset of mRNAs involved in cell proliferation. This subunit can bind 18S rRNA. The polypeptide is Eukaryotic translation initiation factor 3 subunit G (Culex quinquefasciatus (Southern house mosquito)).